We begin with the raw amino-acid sequence, 463 residues long: Argininosuccinate lyase (463 aa).

This sequence belongs to the lyase 1 family. Argininosuccinate lyase subfamily.

The protein localises to the cytoplasm. It carries out the reaction 2-(N(omega)-L-arginino)succinate = fumarate + L-arginine. It functions in the pathway amino-acid biosynthesis; L-arginine biosynthesis; L-arginine from L-ornithine and carbamoyl phosphate: step 3/3. The polypeptide is Argininosuccinate lyase (Prochlorococcus marinus (strain NATL2A)).